Here is a 482-residue protein sequence, read N- to C-terminus: tRNA sulfurtransferase (482 aa).

Residues 61-165 enclose the THUMP domain; sequence DLVRDALTRI…DDRLLLVRGR (105 aa). Residues 183-184, lysine 265, glycine 287, and glutamine 296 each bind ATP; that span reads LI. Residues cysteine 344 and cysteine 456 are joined by a disulfide bond. The Rhodanese domain occupies 404 to 482; sequence LAEGDVVLDI…GYDNVRVYRP (79 aa). Cysteine 456 functions as the Cysteine persulfide intermediate in the catalytic mechanism.

It belongs to the ThiI family.

The protein resides in the cytoplasm. It carries out the reaction [ThiI sulfur-carrier protein]-S-sulfanyl-L-cysteine + a uridine in tRNA + 2 reduced [2Fe-2S]-[ferredoxin] + ATP + H(+) = [ThiI sulfur-carrier protein]-L-cysteine + a 4-thiouridine in tRNA + 2 oxidized [2Fe-2S]-[ferredoxin] + AMP + diphosphate. It catalyses the reaction [ThiS sulfur-carrier protein]-C-terminal Gly-Gly-AMP + S-sulfanyl-L-cysteinyl-[cysteine desulfurase] + AH2 = [ThiS sulfur-carrier protein]-C-terminal-Gly-aminoethanethioate + L-cysteinyl-[cysteine desulfurase] + A + AMP + 2 H(+). It functions in the pathway cofactor biosynthesis; thiamine diphosphate biosynthesis. Its function is as follows. Catalyzes the ATP-dependent transfer of a sulfur to tRNA to produce 4-thiouridine in position 8 of tRNAs, which functions as a near-UV photosensor. Also catalyzes the transfer of sulfur to the sulfur carrier protein ThiS, forming ThiS-thiocarboxylate. This is a step in the synthesis of thiazole, in the thiamine biosynthesis pathway. The sulfur is donated as persulfide by IscS. In Edwardsiella ictaluri (strain 93-146), this protein is tRNA sulfurtransferase.